A 103-amino-acid polypeptide reads, in one-letter code: Small ribosomal subunit protein uS10 (103 aa).

It belongs to the universal ribosomal protein uS10 family. In terms of assembly, part of the 30S ribosomal subunit.

Functionally, involved in the binding of tRNA to the ribosomes. In Vibrio campbellii (strain ATCC BAA-1116), this protein is Small ribosomal subunit protein uS10.